A 622-amino-acid polypeptide reads, in one-letter code: 1-deoxy-D-xylulose-5-phosphate synthase (622 aa).

Thiamine diphosphate contacts are provided by residues His-74 and 115–117; that span reads GHS. Residue Asp-146 coordinates Mg(2+). Residues 147-148, Asn-177, Phe-285, and Glu-366 contribute to the thiamine diphosphate site; that span reads GA. Mg(2+) is bound at residue Asn-177.

Belongs to the transketolase family. DXPS subfamily. As to quaternary structure, homodimer. Mg(2+) is required as a cofactor. It depends on thiamine diphosphate as a cofactor.

It catalyses the reaction D-glyceraldehyde 3-phosphate + pyruvate + H(+) = 1-deoxy-D-xylulose 5-phosphate + CO2. It functions in the pathway metabolic intermediate biosynthesis; 1-deoxy-D-xylulose 5-phosphate biosynthesis; 1-deoxy-D-xylulose 5-phosphate from D-glyceraldehyde 3-phosphate and pyruvate: step 1/1. In terms of biological role, catalyzes the acyloin condensation reaction between C atoms 2 and 3 of pyruvate and glyceraldehyde 3-phosphate to yield 1-deoxy-D-xylulose-5-phosphate (DXP). The polypeptide is 1-deoxy-D-xylulose-5-phosphate synthase (Magnetococcus marinus (strain ATCC BAA-1437 / JCM 17883 / MC-1)).